The primary structure comprises 516 residues: UDP-N-acetylmuramyl-tripeptide synthetase (516 aa).

Position 36 (Ser36) interacts with UDP-N-acetyl-alpha-D-muramoyl-L-alanyl-D-glutamate. 113–119 is a binding site for ATP; the sequence is GTKGKTT. Residues 159-160, Ser186, and Arg194 each bind UDP-N-acetyl-alpha-D-muramoyl-L-alanyl-D-glutamate; that span reads TT. Lys228 carries the post-translational modification N6-carboxylysine.

The protein belongs to the MurCDEF family. MurE subfamily. In terms of processing, carboxylation is probably crucial for Mg(2+) binding and, consequently, for the gamma-phosphate positioning of ATP.

It localises to the cytoplasm. Its pathway is cell wall biogenesis; peptidoglycan biosynthesis. Catalyzes the addition of an amino acid to the nucleotide precursor UDP-N-acetylmuramoyl-L-alanyl-D-glutamate (UMAG) in the biosynthesis of bacterial cell-wall peptidoglycan. The sequence is that of UDP-N-acetylmuramyl-tripeptide synthetase from Limosilactobacillus reuteri (strain DSM 20016) (Lactobacillus reuteri).